We begin with the raw amino-acid sequence, 565 residues long: UvrABC system protein C (565 aa).

In terms of domain architecture, GIY-YIG spans glutamate 12 to valine 89. The 36-residue stretch at lysine 195–isoleucine 230 folds into the UVR domain.

Belongs to the UvrC family. Interacts with UvrB in an incision complex.

It localises to the cytoplasm. Its function is as follows. The UvrABC repair system catalyzes the recognition and processing of DNA lesions. UvrC both incises the 5' and 3' sides of the lesion. The N-terminal half is responsible for the 3' incision and the C-terminal half is responsible for the 5' incision. This chain is UvrABC system protein C, found in Hydrogenobaculum sp. (strain Y04AAS1).